Reading from the N-terminus, the 624-residue chain is LEAF RUST 10 DISEASE-RESISTANCE LOCUS RECEPTOR-LIKE PROTEIN KINASE-like 2.2 (624 aa).

Positions 1–30 (MDYLSSMGSQTARFCLILLFLFYYLPCALS) are cleaved as a signal peptide. Residues 31–263 (QDDLWGCGTP…IPNTRSILIT (233 aa)) are Extracellular-facing. N-linked (GlcNAc...) asparagine glycans are attached at residues N45, N75, N85, N95, N150, and N164. The helical transmembrane segment at 264 to 284 (IGQVVGFHVFIIVVMIIAFLF) threads the bilayer. Residues 285 to 624 (WRRKKVNDLR…EEDSSIYSEV (340 aa)) are Cytoplasmic-facing. Residues 317-599 (KSFTEVVGRG…SLDPPPKPLL (283 aa)) enclose the Protein kinase domain. Residues 323–331 (VGRGGFGTV) and K345 each bind ATP. The active-site Proton acceptor is the D434. Residues 587 to 624 (NLDSLDPPPKPLLHMPMQNNNAESSQPSEEDSSIYSEV) form a disordered region. Over residues 603-624 (MQNNNAESSQPSEEDSSIYSEV) the composition is skewed to polar residues.

This sequence belongs to the protein kinase superfamily. Ser/Thr protein kinase family.

It localises to the membrane. It catalyses the reaction L-seryl-[protein] + ATP = O-phospho-L-seryl-[protein] + ADP + H(+). The catalysed reaction is L-threonyl-[protein] + ATP = O-phospho-L-threonyl-[protein] + ADP + H(+). The polypeptide is LEAF RUST 10 DISEASE-RESISTANCE LOCUS RECEPTOR-LIKE PROTEIN KINASE-like 2.2 (Arabidopsis thaliana (Mouse-ear cress)).